The sequence spans 275 residues: 2,3,4,5-tetrahydropyridine-2,6-dicarboxylate N-succinyltransferase (275 aa).

The substrate site is built by arginine 104 and aspartate 141.

This sequence belongs to the transferase hexapeptide repeat family. In terms of assembly, homotrimer.

Its subcellular location is the cytoplasm. The catalysed reaction is (S)-2,3,4,5-tetrahydrodipicolinate + succinyl-CoA + H2O = (S)-2-succinylamino-6-oxoheptanedioate + CoA. Its pathway is amino-acid biosynthesis; L-lysine biosynthesis via DAP pathway; LL-2,6-diaminopimelate from (S)-tetrahydrodipicolinate (succinylase route): step 1/3. This Haemophilus influenzae (strain PittEE) protein is 2,3,4,5-tetrahydropyridine-2,6-dicarboxylate N-succinyltransferase.